Reading from the N-terminus, the 65-residue chain is Large ribosomal subunit protein bL35 (65 aa).

The span at 1 to 15 shows a compositional bias: basic residues; that stretch reads MPKMKTKKSASKRFQ. Residues 1–27 are disordered; that stretch reads MPKMKTKKSASKRFQVRGSGSIKRGQA.

It belongs to the bacterial ribosomal protein bL35 family.

The chain is Large ribosomal subunit protein bL35 from Bordetella petrii (strain ATCC BAA-461 / DSM 12804 / CCUG 43448).